A 222-amino-acid polypeptide reads, in one-letter code: 6,7-dimethyl-8-ribityllumazine synthase, chloroplastic (222 aa).

Residues 1–66 (MASFAASQTC…NRASFVVTNA (66 aa)) constitute a chloroplast transit peptide. Residues Phe-89, 122-124 (AYE), and 146-148 (AVV) contribute to the 5-amino-6-(D-ribitylamino)uracil site. 151 to 152 (DT) lines the (2S)-2-hydroxy-3-oxobutyl phosphate pocket. The active-site Proton donor is His-154. Position 179 (Phe-179) interacts with 5-amino-6-(D-ribitylamino)uracil. Arg-193 contributes to the (2S)-2-hydroxy-3-oxobutyl phosphate binding site.

It belongs to the DMRL synthase family. In terms of assembly, oligomer forming an icosahedral capsid.

Its subcellular location is the plastid. It localises to the chloroplast. The enzyme catalyses (2S)-2-hydroxy-3-oxobutyl phosphate + 5-amino-6-(D-ribitylamino)uracil = 6,7-dimethyl-8-(1-D-ribityl)lumazine + phosphate + 2 H2O + H(+). The protein operates within cofactor biosynthesis; riboflavin biosynthesis; riboflavin from 2-hydroxy-3-oxobutyl phosphate and 5-amino-6-(D-ribitylamino)uracil: step 1/2. Its function is as follows. Catalyzes the formation of 6,7-dimethyl-8-ribityllumazine by condensation of 5-amino-6-(D-ribitylamino)uracil with 3,4-dihydroxy-2-butanone 4-phosphate. This is the penultimate step in the biosynthesis of riboflavin. In Spinacia oleracea (Spinach), this protein is 6,7-dimethyl-8-ribityllumazine synthase, chloroplastic.